The sequence spans 503 residues: Na(+)-translocating NADH-quinone reductase subunit B (503 aa).

Helical transmembrane passes span 55–75 (MMLV…NSGV), 94–114 (ISGF…FSIL), 120–140 (IFLP…VLFA), 161–181 (TLPP…GVVV), and 186–206 (FGGT…FLFF). Thr248 carries the FMN phosphoryl threonine modification. 5 consecutive transmembrane segments (helical) span residues 361–381 (TSTF…IASW), 387–407 (FGIG…LIVG), 417–437 (FFIP…LVFM), 452–472 (WIYG…NPAY), and 475–495 (GVML…YFAV).

The protein belongs to the NqrB/RnfD family. In terms of assembly, composed of six subunits; NqrA, NqrB, NqrC, NqrD, NqrE and NqrF. The cofactor is FMN.

Its subcellular location is the cell inner membrane. The catalysed reaction is a ubiquinone + n Na(+)(in) + NADH + H(+) = a ubiquinol + n Na(+)(out) + NAD(+). NQR complex catalyzes the reduction of ubiquinone-1 to ubiquinol by two successive reactions, coupled with the transport of Na(+) ions from the cytoplasm to the periplasm. NqrA to NqrE are probably involved in the second step, the conversion of ubisemiquinone to ubiquinol. The sequence is that of Na(+)-translocating NADH-quinone reductase subunit B from Chlamydia caviae (strain ATCC VR-813 / DSM 19441 / 03DC25 / GPIC) (Chlamydophila caviae).